The chain runs to 167 residues: 6,7-dimethyl-8-ribityllumazine synthase (167 aa).

5-amino-6-(D-ribitylamino)uracil contacts are provided by residues phenylalanine 26, 60-62 (AFE), and 89-91 (AII). 94 to 95 (ET) is a (2S)-2-hydroxy-3-oxobutyl phosphate binding site. Histidine 97 functions as the Proton donor in the catalytic mechanism. Residue phenylalanine 122 participates in 5-amino-6-(D-ribitylamino)uracil binding. (2S)-2-hydroxy-3-oxobutyl phosphate is bound at residue arginine 136.

This sequence belongs to the DMRL synthase family. In terms of assembly, forms an icosahedral capsid composed of 60 subunits, arranged as a dodecamer of pentamers.

The enzyme catalyses (2S)-2-hydroxy-3-oxobutyl phosphate + 5-amino-6-(D-ribitylamino)uracil = 6,7-dimethyl-8-(1-D-ribityl)lumazine + phosphate + 2 H2O + H(+). The protein operates within cofactor biosynthesis; riboflavin biosynthesis; riboflavin from 2-hydroxy-3-oxobutyl phosphate and 5-amino-6-(D-ribitylamino)uracil: step 1/2. Catalyzes the formation of 6,7-dimethyl-8-ribityllumazine by condensation of 5-amino-6-(D-ribitylamino)uracil with 3,4-dihydroxy-2-butanone 4-phosphate. This is the penultimate step in the biosynthesis of riboflavin. The protein is 6,7-dimethyl-8-ribityllumazine synthase of Ruthia magnifica subsp. Calyptogena magnifica.